The sequence spans 307 residues: Coproporphyrin III ferrochelatase (307 aa).

Fe-coproporphyrin III-binding positions include Y12, R29, 45-46, S53, and Y124; that span reads RY. The Fe(2+) site is built by H181 and E263.

The protein belongs to the ferrochelatase family.

It localises to the cytoplasm. It catalyses the reaction Fe-coproporphyrin III + 2 H(+) = coproporphyrin III + Fe(2+). The protein operates within porphyrin-containing compound metabolism; protoheme biosynthesis. Functionally, involved in coproporphyrin-dependent heme b biosynthesis. Catalyzes the insertion of ferrous iron into coproporphyrin III to form Fe-coproporphyrin III. It can also insert iron into protoporphyrin IX, but it has a much stronger preference for coproprophyrin III as the substrate. The polypeptide is Coproporphyrin III ferrochelatase (Staphylococcus aureus (strain NCTC 8325 / PS 47)).